Consider the following 520-residue polypeptide: Leucine aminopeptidase 1 (520 aa).

Mn(2+)-binding residues include Lys-288 and Asp-293. Residue Lys-300 is part of the active site. Mn(2+)-binding residues include Asp-313, Asp-373, and Glu-375. The active site involves Arg-377.

This sequence belongs to the peptidase M17 family. As to quaternary structure, homohexamer (dimer of homotrimers). Mn(2+) serves as cofactor.

It is found in the cytoplasm. It catalyses the reaction Release of an N-terminal amino acid, Xaa-|-Yaa-, in which Xaa is preferably Leu, but may be other amino acids including Pro although not Arg or Lys, and Yaa may be Pro. Amino acid amides and methyl esters are also readily hydrolyzed, but rates on arylamides are exceedingly low.. The catalysed reaction is Release of N-terminal proline from a peptide.. In terms of biological role, presumably involved in the processing and regular turnover of intracellular proteins. Catalyzes the removal of unsubstituted N-terminal amino acids from various peptides. Possesses leucine aminopeptidase activity against the model substrate leucine-amido methyl coumarin. Possesses Cys-Gly dipeptidase activity. In addition, can cleave Cys-Leu and Leu-Cys dipeptides. Functions as a molecular chaperone to protect proteins from heat-induced damage. In Arabidopsis thaliana (Mouse-ear cress), this protein is Leucine aminopeptidase 1.